The chain runs to 356 residues: Dihydroorotate dehydrogenase (quinone) (356 aa).

FMN is bound by residues 66–70 (AGFDK) and Thr-90. Lys-70 lines the substrate pocket. 115–119 (NRMGF) contributes to the substrate binding site. Asn-143 and Asn-176 together coordinate FMN. Asn-176 is a substrate binding site. Catalysis depends on Ser-179, which acts as the Nucleophile. Asn-181 contacts substrate. Positions 212 and 240 each coordinate FMN. Position 241 to 242 (241 to 242 (NT)) interacts with substrate. Residues Gly-266, Gly-295, and 316 to 317 (YT) each bind FMN.

The protein belongs to the dihydroorotate dehydrogenase family. Type 2 subfamily. In terms of assembly, monomer. FMN is required as a cofactor.

It is found in the cell membrane. It carries out the reaction (S)-dihydroorotate + a quinone = orotate + a quinol. It participates in pyrimidine metabolism; UMP biosynthesis via de novo pathway; orotate from (S)-dihydroorotate (quinone route): step 1/1. Catalyzes the conversion of dihydroorotate to orotate with quinone as electron acceptor. In Rhodococcus erythropolis (strain PR4 / NBRC 100887), this protein is Dihydroorotate dehydrogenase (quinone).